Consider the following 167-residue polypeptide: Large ribosomal subunit protein uL10 (167 aa).

This sequence belongs to the universal ribosomal protein uL10 family. In terms of assembly, part of the ribosomal stalk of the 50S ribosomal subunit. The N-terminus interacts with L11 and the large rRNA to form the base of the stalk. The C-terminus forms an elongated spine to which L12 dimers bind in a sequential fashion forming a multimeric L10(L12)X complex.

Its function is as follows. Forms part of the ribosomal stalk, playing a central role in the interaction of the ribosome with GTP-bound translation factors. The protein is Large ribosomal subunit protein uL10 of Flavobacterium johnsoniae (strain ATCC 17061 / DSM 2064 / JCM 8514 / BCRC 14874 / CCUG 350202 / NBRC 14942 / NCIMB 11054 / UW101) (Cytophaga johnsonae).